We begin with the raw amino-acid sequence, 145 residues long: 3-dehydroquinate dehydratase (145 aa).

Residue Y22 is the Proton acceptor of the active site. Residues N71, H77, and D84 each contribute to the substrate site. The active-site Proton donor is the H97. Substrate is bound by residues 98–99 and R108; that span reads IS.

It belongs to the type-II 3-dehydroquinase family. Homododecamer.

It catalyses the reaction 3-dehydroquinate = 3-dehydroshikimate + H2O. It participates in metabolic intermediate biosynthesis; chorismate biosynthesis; chorismate from D-erythrose 4-phosphate and phosphoenolpyruvate: step 3/7. Functionally, catalyzes a trans-dehydration via an enolate intermediate. This Thermotoga neapolitana (strain ATCC 49049 / DSM 4359 / NBRC 107923 / NS-E) protein is 3-dehydroquinate dehydratase.